The chain runs to 60 residues: Large ribosomal subunit protein uL30 (60 aa).

This sequence belongs to the universal ribosomal protein uL30 family. Part of the 50S ribosomal subunit.

The polypeptide is Large ribosomal subunit protein uL30 (Lysinibacillus sphaericus (strain C3-41)).